The sequence spans 154 residues: Protein-export protein SecB (154 aa).

The protein belongs to the SecB family. Homotetramer, a dimer of dimers. One homotetramer interacts with 1 SecA dimer.

The protein resides in the cytoplasm. Functionally, one of the proteins required for the normal export of preproteins out of the cell cytoplasm. It is a molecular chaperone that binds to a subset of precursor proteins, maintaining them in a translocation-competent state. It also specifically binds to its receptor SecA. This Vibrio cholerae serotype O1 (strain ATCC 39541 / Classical Ogawa 395 / O395) protein is Protein-export protein SecB.